The primary structure comprises 185 residues: Dioxygenase easH (185 aa).

His-17, Asp-19, and His-93 together coordinate Fe cation.

Belongs to the PhyH family. In terms of assembly, homodimer. The cofactor is Fe cation.

It participates in alkaloid biosynthesis; ergot alkaloid biosynthesis. In terms of biological role, dioxygenase; part of the gene cluster that mediates the biosynthesis of fungal ergot alkaloid ergovaline, the predominant ergopeptine product in E.festucae var. lolii. DmaW catalyzes the first step of ergot alkaloid biosynthesis by condensing dimethylallyl diphosphate (DMAP) and tryptophan to form 4-dimethylallyl-L-tryptophan. The second step is catalyzed by the methyltransferase easF that methylates 4-dimethylallyl-L-tryptophan in the presence of S-adenosyl-L-methionine, resulting in the formation of 4-dimethylallyl-L-abrine. The catalase easC and the FAD-dependent oxidoreductase easE then transform 4-dimethylallyl-L-abrine to chanoclavine-I which is further oxidized by easD in the presence of NAD(+), resulting in the formation of chanoclavine-I aldehyde. Agroclavine dehydrogenase easG then mediates the conversion of chanoclavine-I aldehyde to agroclavine via a non-enzymatic adduct reaction: the substrate is an iminium intermediate that is formed spontaneously from chanoclavine-I aldehyde in the presence of glutathione. The presence of easA is not required to complete this reaction. Further conversion of agroclavine to paspalic acid is a two-step process involving oxidation of agroclavine to elymoclavine and of elymoclavine to paspalic acid, the second step being performed by the elymoclavine oxidase cloA. Paspalic acid is then further converted to D-lysergic acid. Ergovaline is assembled from D-lysergic acid and three different amino acids by the D-lysergyl-peptide-synthetase composed of a monomudular (lpsB) and a trimodular (lpsA) nonribosomal peptide synthetase subunit. This chain is Dioxygenase easH, found in Epichloe festucae var. lolii (Neotyphodium lolii).